Reading from the N-terminus, the 491-residue chain is Glutamyl-tRNA(Gln) amidotransferase subunit A (491 aa).

Active-site charge relay system residues include Lys-76 and Ser-154. Catalysis depends on Ser-178, which acts as the Acyl-ester intermediate.

The protein belongs to the amidase family. GatA subfamily. Heterotrimer of A, B and C subunits.

The catalysed reaction is L-glutamyl-tRNA(Gln) + L-glutamine + ATP + H2O = L-glutaminyl-tRNA(Gln) + L-glutamate + ADP + phosphate + H(+). Allows the formation of correctly charged Gln-tRNA(Gln) through the transamidation of misacylated Glu-tRNA(Gln) in organisms which lack glutaminyl-tRNA synthetase. The reaction takes place in the presence of glutamine and ATP through an activated gamma-phospho-Glu-tRNA(Gln). This Cereibacter sphaeroides (strain ATCC 17023 / DSM 158 / JCM 6121 / CCUG 31486 / LMG 2827 / NBRC 12203 / NCIMB 8253 / ATH 2.4.1.) (Rhodobacter sphaeroides) protein is Glutamyl-tRNA(Gln) amidotransferase subunit A.